Here is an 88-residue protein sequence, read N- to C-terminus: UPF0213 protein SAG0778 (88 aa).

The GIY-YIG domain maps to 4–80 (VPAYMYVLEC…QKTRQAKLTY (77 aa)).

Belongs to the UPF0213 family.

This chain is UPF0213 protein SAG0778, found in Streptococcus agalactiae serotype V (strain ATCC BAA-611 / 2603 V/R).